The chain runs to 275 residues: Phosphate import ATP-binding protein PstB 1 (275 aa).

The 240-residue stretch at 22–261 folds into the ABC transporter domain; the sequence is IETRDLSVYY…DRTEKIFNSP (240 aa). Position 54–61 (54–61) interacts with ATP; it reads GPSGCGKS.

This sequence belongs to the ABC transporter superfamily. Phosphate importer (TC 3.A.1.7) family. The complex is composed of two ATP-binding proteins (PstB), two transmembrane proteins (PstC and PstA) and a solute-binding protein (PstS).

It is found in the cell inner membrane. It catalyses the reaction phosphate(out) + ATP + H2O = ADP + 2 phosphate(in) + H(+). Its function is as follows. Part of the ABC transporter complex PstSACB involved in phosphate import. Responsible for energy coupling to the transport system. The protein is Phosphate import ATP-binding protein PstB 1 of Synechococcus sp. (strain JA-3-3Ab) (Cyanobacteria bacterium Yellowstone A-Prime).